The chain runs to 1487 residues: Probable serine/threonine-protein kinase roco11 (1487 aa).

A disordered region spans residues 108–134 (TQPSSSHNHSNHHHHHHQQQLQQQQQQ). The span at 116–125 (HSNHHHHHHQ) shows a compositional bias: basic residues. 3 LRR repeats span residues 295–316 (NLAELDLSYNNIKEIPKEICQL), 318–340 (HLKILNMNNNQLDDLPLELANLT), and 341–362 (NLKYLAVQDNPLNKFPHHIIEQ). In terms of domain architecture, Roc spans 379–564 (KSETWNKVKL…KILTNEAEKS (186 aa)). Residues 379–564 (KSETWNKVKL…KILTNEAEKS (186 aa)) form a small GTPase-like region. GTP contacts are provided by residues 392-399 (GQEGVGKS), 448-452 (DFGGQ), and 507-510 (THCD). The region spanning 678–872 (VNQKYIDYND…KTYWANGILL (195 aa)) is the COR domain. Positions 891–1007 (SILPNNSSST…NNNNNNNNNI (117 aa)) are disordered. Residues 897–931 (SSSTSSSTSSSTSSSTSSSSSSSTSSSSTSTTTTT) show a composition bias toward low complexity. The segment covering 932–950 (VQIQSSPFGNSTTIVNKLT) has biased composition (polar residues). The span at 951-1007 (NIDNNNNNNNNNNNNNNNNNNINNNNNNNNNNNNNNNNNNNNNNNNNNNNNNNNNNI) shows a compositional bias: low complexity. Residues 1185–1452 (VVCEEQIGVG…YIVKELTNFY (268 aa)) form the Protein kinase domain. Residues 1191 to 1199 (IGVGGFGLV) and K1216 each bind ATP. D1313 acts as the Proton acceptor in catalysis. Positions 1464 to 1487 (KSINDKSPHPDLISNGVPKLQIAK) are disordered.

It belongs to the protein kinase superfamily. TKL Ser/Thr protein kinase family. ROCO subfamily.

It catalyses the reaction L-seryl-[protein] + ATP = O-phospho-L-seryl-[protein] + ADP + H(+). The enzyme catalyses L-threonyl-[protein] + ATP = O-phospho-L-threonyl-[protein] + ADP + H(+). The polypeptide is Probable serine/threonine-protein kinase roco11 (roco11) (Dictyostelium discoideum (Social amoeba)).